Here is a 278-residue protein sequence, read N- to C-terminus: Neuronal membrane glycoprotein M6-a (278 aa).

Position 1 is an N-acetylmethionine (methionine 1). The Cytoplasmic portion of the chain corresponds to 1 to 22 (MEENMEEGQTQKGCFECCIKCL). Residues 23–43 (GGIPYASLIATILLYAGVALF) traverse the membrane as a helical segment. The Extracellular segment spans residues 44–84 (CGCGHEALSGTVNILQTYFEMARTAGDTLDVFTMIDIFKYV). The helical transmembrane segment at 85–105 (IYGIAAAFFVYGILLMVEGFF) threads the bilayer. Residues 106–127 (TTGAIKDLYGDFKITTCGRCVS) are Cytoplasmic-facing. A helical membrane pass occupies residues 128–148 (AWFIMLTYLFMLAWLGVTAFT). The Extracellular portion of the chain corresponds to 149–213 (SLPVYMYFNV…STELNMTFHL (65 aa)). Residue asparagine 164 is glycosylated (N-linked (GlcNAc...) asparagine). Cysteines 174 and 192 form a disulfide. Asparagine 208 carries an N-linked (GlcNAc...) asparagine glycan. The helical transmembrane segment at 214 to 234 (FIVALAGAGAAVIAMVHYLMV) threads the bilayer. The Cytoplasmic segment spans residues 235 to 278 (LSANWAYVKDACRMQKYEDIKSKEEQELHDIHSTRSKERLNAYT). Serine 256 is modified (phosphoserine). A Phosphothreonine modification is found at threonine 278.

The protein belongs to the myelin proteolipid protein family. As to quaternary structure, interacts with OPRM1. Interacts with palmitoyltransferase ZDHHC17/HIP14; the interaction leads to palmitoylation of GPM6A. N-glycosylated. In terms of processing, palmitoylated by ZDHHC17/HIP14. In terms of tissue distribution, expressed in hippocampus (at protein level). Isoform 1 is the predominant isoform expressed in brain, specifically in hippocampus. Isoform 2 is expressed at low levels in brain and kidney.

The protein resides in the cell membrane. The protein localises to the cell projection. It is found in the axon. Its subcellular location is the growth cone. It localises to the dendritic spine. The protein resides in the filopodium. The protein localises to the neuron projection. Functionally, involved in neuronal differentiation, including differentiation and migration of neuronal stem cells. Plays a role in neuronal plasticity and is involved in neurite and filopodia outgrowth, filopodia motility and probably synapse formation. Gpm6a-induced filopodia formation involves mitogen-activated protein kinase (MAPK) and Src signaling pathways. May be involved in neuronal NGF-dependent Ca(2+) influx. May be involved in regulation of endocytosis and intracellular trafficking of G-protein-coupled receptors (GPCRs); enhances internalization and recycling of mu-type opioid receptor. The chain is Neuronal membrane glycoprotein M6-a (Gpm6a) from Rattus norvegicus (Rat).